The sequence spans 85 residues: MSDLPDQTPKDDSVLFEANGVDPRLLEILICPATRQPLAYDRARHELVSKNARLAYPIRGGIPIMLEEEARDLDDTEGTAGGGEA.

The protein belongs to the UPF0434 family.

The protein is UPF0434 protein HNE_3545 of Hyphomonas neptunium (strain ATCC 15444).